Consider the following 853-residue polypeptide: Transcription factor CPH2 (853 aa).

Disordered stretches follow at residues 165 to 209 (EPPI…DKNS) and 296 to 353 (NMNP…VHHP). Low complexity predominate over residues 180–194 (TTTVSSTNSITNTTK). The bHLH domain maps to 205–274 (KDKNSHNMIE…TKATEYIKHL (70 aa)). Pro residues predominate over residues 301–315 (SLPPPPQQMQAPPQP). The segment covering 330–352 (TPASQYPSPQQQVSPTQQQTVHH) has biased composition (low complexity).

The protein localises to the nucleus. In terms of biological role, transcription factor that positively controls filamentous growth, virulence, and invasiveness. Binds directly to the two SRE-1-like elements upstream of TEC1 and thus positively regulates expression of this important hyphal growth regulator. Functions independently of known signaling cascades involving EFG1. Also regulates gene expression during intestinal colonization but is not involved in host cell adhesion. The chain is Transcription factor CPH2 (CPH2) from Candida albicans (strain SC5314 / ATCC MYA-2876) (Yeast).